A 236-amino-acid chain; its full sequence is Biosynthetic peptidoglycan transglycosylase (236 aa).

A helical membrane pass occupies residues 12 to 31 (ALLWFAASSIVLVLVFRWVP).

The protein belongs to the glycosyltransferase 51 family.

It is found in the cell inner membrane. The enzyme catalyses [GlcNAc-(1-&gt;4)-Mur2Ac(oyl-L-Ala-gamma-D-Glu-L-Lys-D-Ala-D-Ala)](n)-di-trans,octa-cis-undecaprenyl diphosphate + beta-D-GlcNAc-(1-&gt;4)-Mur2Ac(oyl-L-Ala-gamma-D-Glu-L-Lys-D-Ala-D-Ala)-di-trans,octa-cis-undecaprenyl diphosphate = [GlcNAc-(1-&gt;4)-Mur2Ac(oyl-L-Ala-gamma-D-Glu-L-Lys-D-Ala-D-Ala)](n+1)-di-trans,octa-cis-undecaprenyl diphosphate + di-trans,octa-cis-undecaprenyl diphosphate + H(+). The protein operates within cell wall biogenesis; peptidoglycan biosynthesis. Functionally, peptidoglycan polymerase that catalyzes glycan chain elongation from lipid-linked precursors. This Pseudomonas putida (strain GB-1) protein is Biosynthetic peptidoglycan transglycosylase.